A 259-amino-acid chain; its full sequence is Putative protein phosphatase (259 aa).

The PPM-type phosphatase domain maps to 8 to 255 (LFASLSKKGP…DNITLNLINL (248 aa)).

The enzyme catalyses O-phospho-L-seryl-[protein] + H2O = L-seryl-[protein] + phosphate. It carries out the reaction O-phospho-L-threonyl-[protein] + H2O = L-threonyl-[protein] + phosphate. This is Putative protein phosphatase from Mycoplasma pneumoniae (strain ATCC 29342 / M129 / Subtype 1) (Mycoplasmoides pneumoniae).